We begin with the raw amino-acid sequence, 1018 residues long: Putative type I restriction enzyme MjaVIIIP endonuclease subunit (1018 aa).

Belongs to the HsdR family. As to quaternary structure, the type I restriction/modification system is composed of three polypeptides R, M and S.

It catalyses the reaction Endonucleolytic cleavage of DNA to give random double-stranded fragments with terminal 5'-phosphates, ATP is simultaneously hydrolyzed.. In terms of biological role, the restriction (R) subunit of a type I restriction enzyme that recognizes 5'-GAYN(5)GTAA-3' and cleaves a random distance away. The R subunit is required for both endonuclease and ATPase activities but not for modification. After locating a non-methylated recognition site, the enzyme complex serves as a molecular motor that translocates DNA in an ATP-dependent manner until a collision occurs that triggers cleavage. The polypeptide is Putative type I restriction enzyme MjaVIIIP endonuclease subunit (Methanocaldococcus jannaschii (strain ATCC 43067 / DSM 2661 / JAL-1 / JCM 10045 / NBRC 100440) (Methanococcus jannaschii)).